We begin with the raw amino-acid sequence, 473 residues long: Serine palmitoyltransferase 1 (473 aa).

The Lumenal portion of the chain corresponds to 1-15; that stretch reads MATVAEQWVLVEMVQ. Residues 1-66 form an interaction with SPTLC2 region; sequence MATVAEQWVL…KEELIEEWQP (66 aa). A helical membrane pass occupies residues 16-36; sequence ALYEAPAYHLILEGILILWII. Residues 37 to 473 lie on the Cytoplasmic side of the membrane; that stretch reads RLVFSKTYKL…IREAAQAVLL (437 aa). A Phosphotyrosine; by ABL modification is found at tyrosine 164.

Belongs to the class-II pyridoxal-phosphate-dependent aminotransferase family. In terms of assembly, component of the serine palmitoyltransferase (SPT) complex, which is also composed of SPTLC2 or SPTLC3 and SPTSSA or SPTSSB. The heterodimer with SPTLC2 or SPTLC3 forms the catalytic core of the enzyme, while SPTSSA or SPTSSB subunits determine substrate specificity. SPT also interacts with ORMDL proteins, especially ORMDL3, which negatively regulate SPT activity in the presence of ceramides. Forms dimers of heterodimers with SPTLC2. Interacts with RTN4 (isoform B). It depends on pyridoxal 5'-phosphate as a cofactor. In terms of processing, phosphorylation at Tyr-164 inhibits activity and promotes cell survival. In terms of tissue distribution, expressed in a variety of tissues. Highest expression in brain, kidney and liver. Expressed in brown and white adipose tissues.

The protein localises to the endoplasmic reticulum membrane. It catalyses the reaction L-serine + hexadecanoyl-CoA + H(+) = 3-oxosphinganine + CO2 + CoA. It carries out the reaction octadecanoyl-CoA + L-serine + H(+) = 3-oxoeicosasphinganine + CO2 + CoA. The catalysed reaction is tetradecanoyl-CoA + L-serine + H(+) = 3-oxohexadecasphinganine + CO2 + CoA. The enzyme catalyses dodecanoyl-CoA + L-serine + H(+) = 3-oxotetradecasphinganine + CO2 + CoA. It functions in the pathway lipid metabolism; sphingolipid metabolism. Its activity is regulated as follows. SPT complex catalytic activity is negatively regulated by ORMDL proteins, including ORMDL3, in the presence of ceramides. This mechanism allows to maintain ceramide levels at sufficient concentrations for the production of complex sphingolipids, but which prevents the accumulation of ceramides to levels that trigger apoptosis. In terms of biological role, component of the serine palmitoyltransferase multisubunit enzyme (SPT) that catalyzes the initial and rate-limiting step in sphingolipid biosynthesis by condensing L-serine and activated acyl-CoA (most commonly palmitoyl-CoA) to form long-chain bases. The SPT complex is also composed of SPTLC2 or SPTLC3 and SPTSSA or SPTSSB. Within this complex, the heterodimer with SPTLC2 or SPTLC3 forms the catalytic core. The composition of the serine palmitoyltransferase (SPT) complex determines the substrate preference. The SPTLC1-SPTLC2-SPTSSA complex shows a strong preference for C16-CoA substrate, while the SPTLC1-SPTLC3-SPTSSA isozyme uses both C14-CoA and C16-CoA as substrates, with a slight preference for C14-CoA. The SPTLC1-SPTLC2-SPTSSB complex shows a strong preference for C18-CoA substrate, while the SPTLC1-SPTLC3-SPTSSB isozyme displays an ability to use a broader range of acyl-CoAs, without apparent preference. Required for adipocyte cell viability and metabolic homeostasis. The protein is Serine palmitoyltransferase 1 (Sptlc1) of Mus musculus (Mouse).